Reading from the N-terminus, the 212-residue chain is Ribonuclease HII (212 aa).

Residues 20-209 (TCIVGVDEVG…VHNILYQEAS (190 aa)) enclose the RNase H type-2 domain. Aspartate 26, glutamate 27, and aspartate 117 together coordinate a divalent metal cation.

This sequence belongs to the RNase HII family. The cofactor is Mn(2+). Mg(2+) is required as a cofactor.

It localises to the cytoplasm. The enzyme catalyses Endonucleolytic cleavage to 5'-phosphomonoester.. Endonuclease that specifically degrades the RNA of RNA-DNA hybrids. The protein is Ribonuclease HII of Cereibacter sphaeroides (strain ATCC 17025 / ATH 2.4.3) (Rhodobacter sphaeroides).